Reading from the N-terminus, the 347-residue chain is Phospho-N-acetylmuramoyl-pentapeptide-transferase (347 aa).

The next 10 membrane-spanning stretches (helical) occupy residues 10 to 30, 67 to 87, 91 to 111, 127 to 147, 164 to 184, 195 to 215, 220 to 240, 250 to 270, 275 to 295, and 325 to 345; these read SLVF…IFLG, AGGI…LPLG, TWLF…DDIV, FVLQ…IYKG, LGHS…AIVG, LDGL…VVAV, IPLA…SLAF, VFMG…CAVM, LLLI…ILQI, and VVKR…IAAL.

This sequence belongs to the glycosyltransferase 4 family. MraY subfamily. It depends on Mg(2+) as a cofactor.

It localises to the cell inner membrane. It carries out the reaction UDP-N-acetyl-alpha-D-muramoyl-L-alanyl-gamma-D-glutamyl-meso-2,6-diaminopimeloyl-D-alanyl-D-alanine + di-trans,octa-cis-undecaprenyl phosphate = di-trans,octa-cis-undecaprenyl diphospho-N-acetyl-alpha-D-muramoyl-L-alanyl-D-glutamyl-meso-2,6-diaminopimeloyl-D-alanyl-D-alanine + UMP. It participates in cell wall biogenesis; peptidoglycan biosynthesis. Its function is as follows. Catalyzes the initial step of the lipid cycle reactions in the biosynthesis of the cell wall peptidoglycan: transfers peptidoglycan precursor phospho-MurNAc-pentapeptide from UDP-MurNAc-pentapeptide onto the lipid carrier undecaprenyl phosphate, yielding undecaprenyl-pyrophosphoryl-MurNAc-pentapeptide, known as lipid I. The chain is Phospho-N-acetylmuramoyl-pentapeptide-transferase from Chlamydia abortus (strain DSM 27085 / S26/3) (Chlamydophila abortus).